The sequence spans 419 residues: UDP-N-acetylglucosamine 1-carboxyvinyltransferase (419 aa).

22 to 23 (KN) is a phosphoenolpyruvate binding site. R92 lines the UDP-N-acetyl-alpha-D-glucosamine pocket. The Proton donor role is filled by C116. C116 carries the post-translational modification 2-(S-cysteinyl)pyruvic acid O-phosphothioketal. UDP-N-acetyl-alpha-D-glucosamine-binding positions include 121-125 (RPIDL), D306, and I328.

It belongs to the EPSP synthase family. MurA subfamily.

It localises to the cytoplasm. The enzyme catalyses phosphoenolpyruvate + UDP-N-acetyl-alpha-D-glucosamine = UDP-N-acetyl-3-O-(1-carboxyvinyl)-alpha-D-glucosamine + phosphate. Its pathway is cell wall biogenesis; peptidoglycan biosynthesis. Its function is as follows. Cell wall formation. Adds enolpyruvyl to UDP-N-acetylglucosamine. Target for the antibiotic fosfomycin. Involved in heteroresistance to antibiotic fosfomycin. Heteroresistance is the ability of a clonal population to grow one or several subpopulations at a frequency of 10(-7) to 10(-3) in the presence of a higher antibiotic concentration than that predicted to be effective by measurement of the minimum inhibitory concentration (MIC). In Streptococcus pneumoniae serotype 2 (strain D39 / NCTC 7466), this protein is UDP-N-acetylglucosamine 1-carboxyvinyltransferase.